The following is a 226-amino-acid chain: Protein AF-9 homolog (226 aa).

A YEATS domain is found at 8 to 169 (RIKTLSVSRP…EEFFKILMSR (162 aa)). Residues 187–224 (QLEQEEIDRIEIGIEKVDKEIDELKQKLENLVKQEAIN) adopt a coiled-coil conformation.

As to quaternary structure, component of the SWR1 chromatin-remodeling complex composed of at least ACT1, ARP4, RVB1, RVB2, ARP6, YAF9, VPS71, VPS72, SWC3, SWC4, SWC5, SWC7 and SWR1, and perhaps BDF1. Component of the NuA4 histone acetyltransferase complex composed of at least ACT1, ARP4, YAF9, VID21, SWC4, EAF3, EAF5, EAF6, EAF7, EPL1, ESA1, TRA1 and YNG2. Interacts with SWC4.

It is found in the cytoplasm. It localises to the nucleus. Functionally, component of the SWR1 complex which mediates the ATP-dependent exchange of histone H2A for the H2A variant HZT1 leading to transcriptional regulation of selected genes by chromatin remodeling. Component of the NuA4 histone acetyltransferase complex which is involved in transcriptional activation of selected genes principally by acetylation of nucleosomal histones H4 and H2A. The NuA4 complex is also involved in DNA repair. Yaf9 may also be required for viability in conditions in which the structural integrity of the spindle is compromised. The sequence is that of Protein AF-9 homolog (YAF9) from Saccharomyces cerevisiae (strain ATCC 204508 / S288c) (Baker's yeast).